A 26-amino-acid chain; its full sequence is M-poneritoxin-Ng1d (26 aa).

In terms of tissue distribution, expressed by the venom gland.

It localises to the secreted. Its subcellular location is the target cell membrane. Has a broad spectrum of activity against both Gram-positive and Gram-negative bacteria and S.cerevisiae. Has insecticidal and hemolytic activities. May act by disrupting the integrity of the bacterial cell membrane. In Neoponera goeldii (Ponerine ant), this protein is M-poneritoxin-Ng1d.